The primary structure comprises 352 residues: MSDPVFFSSVGPILLAEVAALAGAALPEGLDRELAIRGAAPLESAGPDDLAYMDNAKYAEALGLTRARACLVSPRFAARVPEGTIALVTPQPYRGFAKVLARLFPSAARPTSLFGATGVSPGSFVHPAARLEPGVVVDPGVVIGPGAEIGAETVLAAGAVIGPGTRIGRGCAVGPGASVLHALIGNRVIIHGGARIGQDGFGFAMGAGGHLKVPQVGRVIIQDDVEIGANTTIDRGASRDTIIGEGTKIDNLVQIAHNVVIGRHCVIVAQVGISGSTTLEDYVVLGGQVGVVGHLRIGMGAQIAGSSNINKDVPPGARWGGTPAKPVREWFREMTTLKRIAARERLAEDTAE.

His257 acts as the Proton acceptor in catalysis.

The protein belongs to the transferase hexapeptide repeat family. LpxD subfamily. Homotrimer.

It carries out the reaction a UDP-3-O-[(3R)-3-hydroxyacyl]-alpha-D-glucosamine + a (3R)-hydroxyacyl-[ACP] = a UDP-2-N,3-O-bis[(3R)-3-hydroxyacyl]-alpha-D-glucosamine + holo-[ACP] + H(+). It functions in the pathway bacterial outer membrane biogenesis; LPS lipid A biosynthesis. Catalyzes the N-acylation of UDP-3-O-acylglucosamine using 3-hydroxyacyl-ACP as the acyl donor. Is involved in the biosynthesis of lipid A, a phosphorylated glycolipid that anchors the lipopolysaccharide to the outer membrane of the cell. In Methylobacterium nodulans (strain LMG 21967 / CNCM I-2342 / ORS 2060), this protein is UDP-3-O-acylglucosamine N-acyltransferase.